The following is a 265-amino-acid chain: Arcelin-2 (265 aa).

The signal sequence occupies residues 1–21 (MASSNLLTLALFLVLLTHANS). N-linked (GlcNAc...) asparagine glycans are attached at residues Asn33 and Asn89. Cys165 and Cys201 are oxidised to a cystine.

Belongs to the leguminous lectin family.

Its function is as follows. Seed storage. This carbohydrate-binding lectin has toxic effects on bean bruchid pests. Antibiosis properties of legume lectins are proposed to be due to the lysis of epithelial cells of the intestine by binding to the carbohydrate moieties of these proteins. This chain is Arcelin-2 (ARC2), found in Phaseolus vulgaris (Kidney bean).